A 435-amino-acid chain; its full sequence is 5-hydroxybenzimidazole synthase (435 aa).

Residues methionine 95, tyrosine 124, histidine 163, 186–188, 227–230, and glutamate 266 contribute to the substrate site; these read SKG and NGLR. Zn(2+) is bound at residue histidine 270. Tyrosine 293 provides a ligand contact to substrate. Residue histidine 334 participates in Zn(2+) binding. Cysteine 410, cysteine 413, and cysteine 417 together coordinate [4Fe-4S] cluster.

This sequence belongs to the ThiC family. 5-hydroxybenzimidazole synthase subfamily. In terms of assembly, homodimer. The cofactor is [4Fe-4S] cluster.

It catalyses the reaction 5-amino-1-(5-phospho-beta-D-ribosyl)imidazole + AH2 + S-adenosyl-L-methionine = 5-hydroxybenzimidazole + 5'-deoxyadenosine + formate + L-methionine + A + NH4(+) + phosphate + 2 H(+). The protein operates within cofactor biosynthesis; adenosylcobalamin biosynthesis. Its function is as follows. Catalyzes the complex conversion of aminoimidazole ribotide (AIR) to 5-hydroxybenzimidazole (5-HBI) in a radical S-adenosyl-L-methionine (SAM)-dependent reaction. Is thus involved in the anaerobic biosynthesis of dimethylbenzimidazole (DMB), the lower axial ligand of vitamin B12 (cobalamin). The polypeptide is 5-hydroxybenzimidazole synthase (Desulfuromonas acetoxidans (strain DSM 684 / 11070)).